Here is a 396-residue protein sequence, read N- to C-terminus: MAATKSHALVHRVLAECPVTKARACELQMPHGQVKTPVFMPVGTQGTMKGVTADQLRNLGCEICLGNTYHLGMRPGPEIMKKASGLHGFMNWDRNLLTDSGGFQMVSLVELSKVTEEGVQFRSPYDGKEILLTPEKSIEIQNALGSDIMMQLDDVVSSTISGPRVEEAMHRSIRWLDRCIAANGNPDRQNLFAIIQGGLDAELRKQCLQEMTKRDVPGFAIGGLSGGEEKDHFWRMVTLSTDHLPRDKPRYLMGVGYATDLVVCVALGCDMFDCVFPTRTARFGSALVPWGSLQLKSKQFAKDFQPIDKNCDCPTCQRYSRSYINALFKSDTAAMHHITIHNIAYQLNLMRSVRESILQGRFPQFVQDFMKTMYGNKDKYPQWAVAALETVGITLQ.

The active-site Proton acceptor is Asp-99. Residues 99–103, Asp-153, Gln-196, and Gly-223 each bind queuine; that span reads DSGGF. An RNA binding region spans residues 254–260; that stretch reads GVGYATD. Catalysis depends on Asp-273, which acts as the Nucleophile. Positions 278-282 are RNA binding; important for wobble base 34 recognition; sequence TRTAR. Zn(2+)-binding residues include Cys-311, Cys-313, Cys-316, and His-341.

Belongs to the queuine tRNA-ribosyltransferase family. Heterodimer of a catalytic subunit qtrt1 and an accessory subunit qtrt2. The cofactor is Zn(2+).

It is found in the cytoplasm. Its subcellular location is the mitochondrion outer membrane. The enzyme catalyses guanosine(34) in tRNA + queuine = queuosine(34) in tRNA + guanine. Catalytic subunit of the queuine tRNA-ribosyltransferase (TGT) that catalyzes the base-exchange of a guanine (G) residue with queuine (Q) at position 34 (anticodon wobble position) in tRNAs with GU(N) anticodons (tRNA-Asp, -Asn, -His and -Tyr), resulting in the hypermodified nucleoside queuosine (7-(((4,5-cis-dihydroxy-2-cyclopenten-1-yl)amino)methyl)-7-deazaguanosine). Catalysis occurs through a double-displacement mechanism. The nucleophile active site attacks the C1' of nucleotide 34 to detach the guanine base from the RNA, forming a covalent enzyme-RNA intermediate. The proton acceptor active site deprotonates the incoming queuine, allowing a nucleophilic attack on the C1' of the ribose to form the product. This is Queuine tRNA-ribosyltransferase catalytic subunit 1 from Xenopus laevis (African clawed frog).